The chain runs to 498 residues: Trehalose-6-phosphate synthase (498 aa).

Arg28 is a D-glucose 6-phosphate binding site. 48–49 contacts UDP-alpha-D-glucose; that stretch reads GG. D-glucose 6-phosphate is bound by residues Tyr106 and Asp160. Positions 302 and 307 each coordinate UDP-alpha-D-glucose. Arg340 contacts D-glucose 6-phosphate. Residue 405–409 coordinates UDP-alpha-D-glucose; it reads LVAKE.

This sequence belongs to the glycosyltransferase 20 family. As to quaternary structure, homotetramer.

The catalysed reaction is ADP-alpha-D-glucose + D-glucose 6-phosphate = alpha,alpha-trehalose 6-phosphate + ADP + H(+). It catalyses the reaction CDP-alpha-D-glucose + D-glucose 6-phosphate = alpha,alpha-trehalose 6-phosphate + CDP + H(+). The enzyme catalyses GDP-alpha-D-glucose + D-glucose 6-phosphate = alpha,alpha-trehalose 6-phosphate + GDP + H(+). It carries out the reaction TDP-alpha-D-glucose + D-glucose 6-phosphate = 5-methyl-UDP + alpha,alpha-trehalose 6-phosphate + H(+). The catalysed reaction is D-glucose 6-phosphate + UDP-alpha-D-glucose = alpha,alpha-trehalose 6-phosphate + UDP + H(+). It participates in glycan biosynthesis; trehalose biosynthesis. Its function is as follows. Probably involved in the osmoprotection via the biosynthesis of trehalose and in the production of glycogen and alpha-glucan via the TreS-Pep2 branch involved in the biosynthesis of maltose-1-phosphate (M1P). Catalyzes the transfer of glucose from UDP-glucose (UDP-Glc) to D-glucose 6-phosphate (Glc-6-P) to form trehalose-6-phosphate. Probably also able to use ADP-Glc, CDP-Glc, GDP-Glc and TDP-Glc as glucosyl donors. The sequence is that of Trehalose-6-phosphate synthase from Mycobacterium leprae (strain TN).